A 409-amino-acid chain; its full sequence is Glutamyl-tRNA reductase (409 aa).

Substrate contacts are provided by residues 46–49, Ser-88, 93–95, and Gln-99; these read TCNR and ENE. Cys-47 serves as the catalytic Nucleophile. 164 to 169 provides a ligand contact to NADP(+); the sequence is GNGMIA.

It belongs to the glutamyl-tRNA reductase family. As to quaternary structure, homodimer.

It carries out the reaction (S)-4-amino-5-oxopentanoate + tRNA(Glu) + NADP(+) = L-glutamyl-tRNA(Glu) + NADPH + H(+). It participates in porphyrin-containing compound metabolism; protoporphyrin-IX biosynthesis; 5-aminolevulinate from L-glutamyl-tRNA(Glu): step 1/2. Functionally, catalyzes the NADPH-dependent reduction of glutamyl-tRNA(Glu) to glutamate 1-semialdehyde (GSA). The protein is Glutamyl-tRNA reductase of Thermoplasma acidophilum (strain ATCC 25905 / DSM 1728 / JCM 9062 / NBRC 15155 / AMRC-C165).